A 469-amino-acid polypeptide reads, in one-letter code: MSAPRTLYDKIWDDHLVDSQADGTCLLYIDRHLVHEVTSPQAFEGLRIAGRKVRAPEKTLAVVDHNVPTSPDRHLGIKNEESRIQVEALARNAADFGVEYYSESDKRQGIVHIVGPEQGFTLPGMTIVCGDSHTSTHGAFGALAHGIGTSEVEHVLATQTLIQKKAKNMLVRVDGQLPPGVTAKDIILAIIGEIGTAGGTGHVIEFAGEAIRSLSMEGRMTVCNMTIEGGARAGLIAPDETTFAYIEDRPRAPKGEAWDMAVEYWKTLHTDEGAHYDRVVVLDAANLPPIVSWGSSPEDVVSVQGVVPNPDEIPDETKRTSKWRALDYMGLKPGTRITDIAIDRVFIGSCTNGRIEDLRAVAKVVEGRKVAPTVSAMIVPGSGLVKEQAEVEGLDKIFREAGFDWREPGCSMCLAMNDDRLKPGERCASTSNRNFEGRQGFKGRTHLLSPAMAAAAAIAGHFVDIREWK.

[4Fe-4S] cluster-binding residues include Cys350, Cys410, and Cys413.

It belongs to the aconitase/IPM isomerase family. LeuC type 1 subfamily. As to quaternary structure, heterodimer of LeuC and LeuD. [4Fe-4S] cluster serves as cofactor.

It carries out the reaction (2R,3S)-3-isopropylmalate = (2S)-2-isopropylmalate. Its pathway is amino-acid biosynthesis; L-leucine biosynthesis; L-leucine from 3-methyl-2-oxobutanoate: step 2/4. Functionally, catalyzes the isomerization between 2-isopropylmalate and 3-isopropylmalate, via the formation of 2-isopropylmaleate. The protein is 3-isopropylmalate dehydratase large subunit of Sinorhizobium medicae (strain WSM419) (Ensifer medicae).